We begin with the raw amino-acid sequence, 201 residues long: Nucleoside triphosphate pyrophosphatase (201 aa).

Asp77 serves as the catalytic Proton acceptor.

The protein belongs to the Maf family. Requires a divalent metal cation as cofactor.

Its subcellular location is the cytoplasm. It catalyses the reaction a ribonucleoside 5'-triphosphate + H2O = a ribonucleoside 5'-phosphate + diphosphate + H(+). The enzyme catalyses a 2'-deoxyribonucleoside 5'-triphosphate + H2O = a 2'-deoxyribonucleoside 5'-phosphate + diphosphate + H(+). Functionally, nucleoside triphosphate pyrophosphatase. May have a dual role in cell division arrest and in preventing the incorporation of modified nucleotides into cellular nucleic acids. This Rickettsia akari (strain Hartford) protein is Nucleoside triphosphate pyrophosphatase.